A 182-amino-acid polypeptide reads, in one-letter code: Biotin carboxyl carrier protein of acetyl-CoA carboxylase (182 aa).

Residues 70 to 95 (AAPSPSPEPGTSRAADHAVTSSGSQP) are disordered. Residues 104–180 (LAEVASPMVG…EYNQPLMRIK (77 aa)) enclose the Biotinyl-binding domain. An N6-biotinyllysine modification is found at Lys-146.

Homodimer.

The protein operates within lipid metabolism; fatty acid biosynthesis. Functionally, this protein is a component of the acetyl coenzyme A carboxylase complex; first, biotin carboxylase catalyzes the carboxylation of the carrier protein and then the transcarboxylase transfers the carboxyl group to form malonyl-CoA. In Nostoc sp. (strain PCC 7120 / SAG 25.82 / UTEX 2576), this protein is Biotin carboxyl carrier protein of acetyl-CoA carboxylase (accB).